The chain runs to 181 residues: Ion-translocating oxidoreductase complex subunit B (181 aa).

Residues Met-1–Ala-26 form a hydrophobic region. A 4Fe-4S domain is found at Glu-32–Val-90. The [4Fe-4S] cluster site is built by Cys-49, Cys-52, Cys-57, Cys-73, Cys-110, Cys-113, Cys-116, Cys-120, Cys-140, Cys-143, Cys-146, and Cys-150. 2 consecutive 4Fe-4S ferredoxin-type domains span residues Lys-101 to Lys-130 and Gln-131 to Val-160.

It belongs to the 4Fe4S bacterial-type ferredoxin family. RnfB subfamily. The complex is composed of six subunits: RnfA, RnfB, RnfC, RnfD, RnfE and RnfG. The cofactor is [4Fe-4S] cluster.

It is found in the cell inner membrane. Part of a membrane-bound complex that couples electron transfer with translocation of ions across the membrane. The sequence is that of Ion-translocating oxidoreductase complex subunit B from Magnetococcus marinus (strain ATCC BAA-1437 / JCM 17883 / MC-1).